A 162-amino-acid polypeptide reads, in one-letter code: UPF0763 protein Sdel_0383 (162 aa).

The protein belongs to the UPF0763 family.

The polypeptide is UPF0763 protein Sdel_0383 (Sulfurospirillum deleyianum (strain ATCC 51133 / DSM 6946 / 5175)).